Here is a 558-residue protein sequence, read N- to C-terminus: Protein NRT1/ PTR FAMILY 2.3 (558 aa).

Transmembrane regions (helical) follow at residues 33-53 (TLLG…VFLI), 69-89 (VANG…DSFF), 92-112 (IPVI…LTLI), 128-148 (VLCT…LALV), 176-196 (FFNW…TAIV), 203-223 (SWKL…IVFV), 329-349 (LWLS…LIVL), 371-391 (VIII…VFPM), 403-423 (LQKV…SAVV), 439-459 (VLWL…QFPA), 478-498 (SLTS…IDLI), and 517-537 (VYWL…VCSW).

Belongs to the major facilitator superfamily. Proton-dependent oligopeptide transporter (POT/PTR) (TC 2.A.17) family. In terms of tissue distribution, expressed in flowers, siliques and root epidermis or cortex. Detected in shoots.

The protein resides in the membrane. In terms of biological role, transporter involved in a passive nitrate efflux. The sequence is that of Protein NRT1/ PTR FAMILY 2.3 (NPF2.3) from Arabidopsis thaliana (Mouse-ear cress).